The following is a 379-amino-acid chain: Queuine tRNA-ribosyltransferase (379 aa).

Residue D93 is the Proton acceptor of the active site. Substrate contacts are provided by residues 93–97, D147, Q191, and G218; that span reads DSGGF. The segment at 249–255 is RNA binding; that stretch reads GVGKPED. D268 functions as the Nucleophile in the catalytic mechanism. The segment at 273 to 277 is RNA binding; important for wobble base 34 recognition; it reads TRNAR. C306, C308, C311, and H337 together coordinate Zn(2+).

It belongs to the queuine tRNA-ribosyltransferase family. Homodimer. Within each dimer, one monomer is responsible for RNA recognition and catalysis, while the other monomer binds to the replacement base PreQ1. Requires Zn(2+) as cofactor.

The catalysed reaction is 7-aminomethyl-7-carbaguanine + guanosine(34) in tRNA = 7-aminomethyl-7-carbaguanosine(34) in tRNA + guanine. Its pathway is tRNA modification; tRNA-queuosine biosynthesis. In terms of biological role, catalyzes the base-exchange of a guanine (G) residue with the queuine precursor 7-aminomethyl-7-deazaguanine (PreQ1) at position 34 (anticodon wobble position) in tRNAs with GU(N) anticodons (tRNA-Asp, -Asn, -His and -Tyr). Catalysis occurs through a double-displacement mechanism. The nucleophile active site attacks the C1' of nucleotide 34 to detach the guanine base from the RNA, forming a covalent enzyme-RNA intermediate. The proton acceptor active site deprotonates the incoming PreQ1, allowing a nucleophilic attack on the C1' of the ribose to form the product. After dissociation, two additional enzymatic reactions on the tRNA convert PreQ1 to queuine (Q), resulting in the hypermodified nucleoside queuosine (7-(((4,5-cis-dihydroxy-2-cyclopenten-1-yl)amino)methyl)-7-deazaguanosine). The protein is Queuine tRNA-ribosyltransferase of Actinobacillus succinogenes (strain ATCC 55618 / DSM 22257 / CCUG 43843 / 130Z).